Here is a 91-residue protein sequence, read N- to C-terminus: Small ubiquitin-related modifier (91 aa).

One can recognise a Ubiquitin-like domain in the interval 13-91; sequence EYIKIKVVGQ…EVYQEQLGGF (79 aa). G90 is covalently cross-linked (Glycyl lysine isopeptide (Gly-Lys) (interchain with K-? in acceptor proteins)). A propeptide is located at residue F91.

The protein belongs to the ubiquitin family. SUMO subfamily. As to quaternary structure, covalently attached to tbx-2. Covalently attached to lin-1. Covalently attached to lin-11. Covalently attached to sop-2. Covalently attached to bet-1. Post-translationally, cleavage of precursor form by ulp-1 is necessary for function.

Its subcellular location is the cytoplasm. It is found in the nucleus. It localises to the cytoskeleton. The protein localises to the spindle. The protein resides in the chromosome. Its subcellular location is the microtubule organizing center. It is found in the centrosome. Ubiquitin-like protein which can be covalently attached to target lysines as a monomer. Does not seem to be involved in protein degradation and may function as an antagonist of ubiquitin in the degradation process. Plays a role in a number of cellular processes such as nuclear transport, DNA replication and repair, mitosis and signal transduction. Covalent attachment to its substrates requires prior activation by the E1 complex aos-1-uba-2 and linkage to the E2 enzyme ubc-9, and can be promoted by an E3 ligase such as gei-17. Required for embryonic development, fertility, vulval morphogenesis and inhibition of vulval cell fates. Probably by sumoylating bet-1, prevents muscle myosin depletion in aging adults probably by preventing myoblast growth factor receptor egl-15 overexpression. Plays a role in the attenuation of the let-60/ras pathway. Plays a role in male tail tip morphogenesis. Plays a role in the mitochondrial stress response with its covalent attachment to transcription factors dve-1 and afts-1 negatively regulating the mitochondrial unfolded protein response. The polypeptide is Small ubiquitin-related modifier (Caenorhabditis elegans).